The sequence spans 399 residues: Homocysteine-responsive endoplasmic reticulum-resident ubiquitin-like domain member 2 protein (399 aa).

The Ubiquitin-like domain occupies 10–89 (VTLVIKAPNQ…HMVHLVCASR (80 aa)). 2 disordered regions span residues 88–144 (SRTP…SIRH) and 211–250 (ASNQ…APEM). Positions 95–106 (PKASTSNKSMGT) are enriched in polar residues. A compositionally biased stretch (low complexity) spans 107–124 (ASISRSSSEHSGSASPAS). Positions 211-221 (ASNQSPSNGEN) are enriched in polar residues. Positions 234-246 (SPPPNPPRAPPNV) are enriched in pro residues. Residues 299-319 (FVMVMGAMILVYMHQAGWFPL) form a helical membrane-spanning segment.

It is found in the membrane. Could be involved in the unfolded protein response (UPR) pathway. The polypeptide is Homocysteine-responsive endoplasmic reticulum-resident ubiquitin-like domain member 2 protein (herpud2) (Xenopus tropicalis (Western clawed frog)).